Consider the following 182-residue polypeptide: MSFDKQNLIWIDLEMTGLDPEKERIIEIATIVTDKNLNILAEGPVLAVHQSDELLNKMNDWCQKTHSENGLIERIKASKLTERAAELQTLDFLKKWVPKGASPICGNSIAQDKRFLVKYMPDLADYFHYRHLDVSTLKELAARWKPEILEGFKKENTHLALDDIRESIKELAYYREHFMKLD.

In terms of domain architecture, Exonuclease spans 8–171; the sequence is LIWIDLEMTG…DDIRESIKEL (164 aa). Tyrosine 129 is an active-site residue.

Belongs to the oligoribonuclease family.

Its subcellular location is the cytoplasm. Its function is as follows. 3'-to-5' exoribonuclease specific for small oligoribonucleotides. The polypeptide is Oligoribonuclease (orn) (Haemophilus influenzae (strain ATCC 51907 / DSM 11121 / KW20 / Rd)).